The sequence spans 157 residues: 2-C-methyl-D-erythritol 2,4-cyclodiphosphate synthase (157 aa).

A divalent metal cation-binding residues include Asp9 and His11. Residues 9-11 and 35-36 contribute to the 4-CDP-2-C-methyl-D-erythritol 2-phosphate site; these read DVH and HS. His43 serves as a coordination point for a divalent metal cation. 4-CDP-2-C-methyl-D-erythritol 2-phosphate contacts are provided by residues 57–59, 62–66, 101–107, 133–136, Phe140, and Arg143; these read DIG, FPDTD, AQKPKMA, and TTTE.

The protein belongs to the IspF family. As to quaternary structure, homotrimer. It depends on a divalent metal cation as a cofactor.

It carries out the reaction 4-CDP-2-C-methyl-D-erythritol 2-phosphate = 2-C-methyl-D-erythritol 2,4-cyclic diphosphate + CMP. It participates in isoprenoid biosynthesis; isopentenyl diphosphate biosynthesis via DXP pathway; isopentenyl diphosphate from 1-deoxy-D-xylulose 5-phosphate: step 4/6. Its function is as follows. Involved in the biosynthesis of isopentenyl diphosphate (IPP) and dimethylallyl diphosphate (DMAPP), two major building blocks of isoprenoid compounds. Catalyzes the conversion of 4-diphosphocytidyl-2-C-methyl-D-erythritol 2-phosphate (CDP-ME2P) to 2-C-methyl-D-erythritol 2,4-cyclodiphosphate (ME-CPP) with a corresponding release of cytidine 5-monophosphate (CMP). This chain is 2-C-methyl-D-erythritol 2,4-cyclodiphosphate synthase, found in Halalkalibacterium halodurans (strain ATCC BAA-125 / DSM 18197 / FERM 7344 / JCM 9153 / C-125) (Bacillus halodurans).